Consider the following 355-residue polypeptide: 3-isopropylmalate dehydrogenase (355 aa).

Residue 78-91 (GYKWDNLPRPERPE) participates in NAD(+) binding. Substrate is bound by residues arginine 98, arginine 136, and aspartate 226. Residues aspartate 226, aspartate 250, and aspartate 254 each coordinate Mg(2+). 284–296 (GSAPDIAGQDKAN) serves as a coordination point for NAD(+).

The protein belongs to the isocitrate and isopropylmalate dehydrogenases family. LeuB type 1 subfamily. In terms of assembly, homodimer. It depends on Mg(2+) as a cofactor. The cofactor is Mn(2+).

It is found in the cytoplasm. It catalyses the reaction (2R,3S)-3-isopropylmalate + NAD(+) = 4-methyl-2-oxopentanoate + CO2 + NADH. It participates in amino-acid biosynthesis; L-leucine biosynthesis; L-leucine from 3-methyl-2-oxobutanoate: step 3/4. In terms of biological role, catalyzes the oxidation of 3-carboxy-2-hydroxy-4-methylpentanoate (3-isopropylmalate) to 3-carboxy-4-methyl-2-oxopentanoate. The product decarboxylates to 4-methyl-2 oxopentanoate. The protein is 3-isopropylmalate dehydrogenase (leuB) of Arthrospira platensis (Spirulina platensis).